We begin with the raw amino-acid sequence, 269 residues long: 3-ketodihydrosphingosine reductase (269 aa).

Positions 10, 12, 13, 14, 36, and 50 each coordinate NADPH. The GXSXG motif lies at 10–14; the sequence is GASSG. Serine 12 functions as the Nucleophile; for lipase activity in the catalytic mechanism. The active-site Proton donor is serine 128. The active-site Proton acceptor is the tyrosine 142. NADP(+) contacts are provided by tyrosine 142 and lysine 146. Residues 142–146 and 175–177 contribute to the NADPH site; these read YSASK and FNT. Residue lysine 146 is part of the active site. Residue lysine 146 is the Lowers pKa of active site Tyr of the active site.

Belongs to the short-chain dehydrogenases/reductases (SDR) family.

The enzyme catalyses sphinganine + NADP(+) = 3-oxosphinganine + NADPH + H(+). The protein operates within lipid metabolism; sphingolipid metabolism. Catalyzes the reduction of 3'-oxosphinganine (3-ketodihydrosphingosine/KDS) to sphinganine (dihydrosphingosine/DHS), the second step of de novo sphingolipid biosynthesis. This Bacteroides thetaiotaomicron (strain ATCC 29148 / DSM 2079 / JCM 5827 / CCUG 10774 / NCTC 10582 / VPI-5482 / E50) protein is 3-ketodihydrosphingosine reductase.